Here is an 83-residue protein sequence, read N- to C-terminus: SPbeta prophage-derived uncharacterized protein YopE (83 aa).

A run of 2 helical transmembrane segments spans residues 5–25 (AYFLIIWLGVGLLTGIKFIFV) and 60–80 (VIAFFMLIGLLPLAMRITKLF).

It localises to the cell membrane. This Bacillus subtilis (strain 168) protein is SPbeta prophage-derived uncharacterized protein YopE (yopE).